The following is a 199-amino-acid chain: Urease accessory protein UreG (199 aa).

Position 8 to 15 (8 to 15) interacts with GTP; that stretch reads GPVGSGKT.

The protein belongs to the SIMIBI class G3E GTPase family. UreG subfamily. As to quaternary structure, homodimer. UreH, UreF and UreG form a complex that acts as a GTP-hydrolysis-dependent molecular chaperone, activating the urease apoprotein by helping to assemble the nickel containing metallocenter of UreC. The UreE protein probably delivers the nickel.

It is found in the cytoplasm. Facilitates the functional incorporation of the urease nickel metallocenter. This process requires GTP hydrolysis, probably effectuated by UreG. In Helicobacter pylori (strain J99 / ATCC 700824) (Campylobacter pylori J99), this protein is Urease accessory protein UreG.